A 284-amino-acid polypeptide reads, in one-letter code: NAD kinase (284 aa).

Aspartate 65 (proton acceptor) is an active-site residue. Residues 65–66 (DG), 139–140 (ND), arginine 150, arginine 167, aspartate 169, and glutamine 239 each bind NAD(+).

It belongs to the NAD kinase family. The cofactor is a divalent metal cation.

Its subcellular location is the cytoplasm. It carries out the reaction NAD(+) + ATP = ADP + NADP(+) + H(+). Involved in the regulation of the intracellular balance of NAD and NADP, and is a key enzyme in the biosynthesis of NADP. Catalyzes specifically the phosphorylation on 2'-hydroxyl of the adenosine moiety of NAD to yield NADP. The sequence is that of NAD kinase from Desulfatibacillum aliphaticivorans.